The following is a 266-amino-acid chain: Proline-rich protein 23A (266 aa).

Over residues 1–18 (MGSRPRSPSAFPAPWWGQ) the composition is skewed to low complexity. 2 disordered regions span residues 1–47 (MGSR…SLED) and 197–266 (EPCA…LFQE). Positions 227–238 (PSSPLQPLPPSP) are enriched in pro residues. Over residues 255–266 (PPCKARRRLFQE) the composition is skewed to basic residues.

This sequence belongs to the PRR23 family.

In Homo sapiens (Human), this protein is Proline-rich protein 23A (PRR23A).